The sequence spans 406 residues: Nodal homolog (406 aa).

Residues 1–18 (MAFLTAVLYLGFACISQG) form the signal peptide. The propeptide occupies 19-281 (LPTWPDRVES…RVPGIRRHRR (263 aa)). N71, N136, and N172 each carry an N-linked (GlcNAc...) asparagine glycan. Residues 195–222 (KERAERGSGMSNAEFIDAPGPSQQYNPH) form a disordered region. Intrachain disulfides connect C306/C372, C335/C403, and C339/C405. N-linked (GlcNAc...) asparagine glycosylation occurs at N344.

Belongs to the TGF-beta family. Homodimer; disulfide-linked. Interacts with, and is inhibited by cer1 and gdf10/bmp3b. In the first phase of expression, localized to the vegetal region of the blastula. During gastrulation (stage 10.5), this expression disappears and instead becomes localized to the dorsal marginal zone, with enrichment in the organizer. During the second phase of expression in neurulae and tailbud embryos, expression restarts firstly in two symmetric patches near the posterior end of the notochord, and then in a large asymmetrical domain in the left lateral plate mesoderm.

It localises to the secreted. Cooperation and regulatory loops of multiple nodals are essential for mesendoderm patterning in early embryos. Essential for mesoderm formation and axial patterning during embryonic development. Activates the activin-like signaling pathway to induce dorsal and ventral mesoderm in animal cap ectoderm. In addition, also dorsalizes ventral marginal zone (VMZ) tissues during gastrulation. Acts in a downstream signaling cascade via cripto and cer1 to mediate cardiogenesis in embryonic mesoderm. Directs the orientation of the left-right axis by driving the left-specific gene cascade in the left lateral plate mesoderm. This is Nodal homolog from Xenopus laevis (African clawed frog).